We begin with the raw amino-acid sequence, 219 residues long: MALLVMVRHGQSIWNLENRFTGWTDVPLTEKGRAEARACGELIYCVPFAVAFTSKLTRAQDTLRLILEAADQPDVPVIEDQALNERHYGELQGLNKAETAAKYGEETVRQWRRSLEGRPPGGESLKDTALRSLRYFYEKIVPELEAGKNVLVSAHGNTIRAILMELDHLSPEQVEKVEIEYCVPVAFEHQADGTFSQVLMPRCDIIRPPQPPARSIARL.

Substrate contacts are provided by residues 8–15 (RHGQSIWN), 21–22 (TG), R58, 85–88 (ERHY), K96, 112–113 (RR), and 156–157 (GN). Residue H9 is the Tele-phosphohistidine intermediate of the active site. Residue E85 is the Proton donor/acceptor of the active site.

The protein belongs to the phosphoglycerate mutase family. BPG-dependent PGAM subfamily.

It catalyses the reaction (2R)-2-phosphoglycerate = (2R)-3-phosphoglycerate. It participates in carbohydrate degradation; glycolysis; pyruvate from D-glyceraldehyde 3-phosphate: step 3/5. Its function is as follows. Catalyzes the interconversion of 2-phosphoglycerate and 3-phosphoglycerate. The polypeptide is 2,3-bisphosphoglycerate-dependent phosphoglycerate mutase 2 (Gloeobacter violaceus (strain ATCC 29082 / PCC 7421)).